A 147-amino-acid polypeptide reads, in one-letter code: UPF0178 protein AFE_3267 (147 aa).

This sequence belongs to the UPF0178 family.

This chain is UPF0178 protein AFE_3267, found in Acidithiobacillus ferrooxidans (strain ATCC 23270 / DSM 14882 / CIP 104768 / NCIMB 8455) (Ferrobacillus ferrooxidans (strain ATCC 23270)).